Reading from the N-terminus, the 97-residue chain is Large ribosomal subunit protein uL23 (97 aa).

The protein belongs to the universal ribosomal protein uL23 family. In terms of assembly, part of the 50S ribosomal subunit. Contacts protein L29, and trigger factor when it is bound to the ribosome.

In terms of biological role, one of the early assembly proteins it binds 23S rRNA. One of the proteins that surrounds the polypeptide exit tunnel on the outside of the ribosome. Forms the main docking site for trigger factor binding to the ribosome. The protein is Large ribosomal subunit protein uL23 of Clostridium botulinum (strain ATCC 19397 / Type A).